The chain runs to 342 residues: N-acetyl-gamma-glutamyl-phosphate reductase (342 aa).

Cys149 is an active-site residue.

Belongs to the NAGSA dehydrogenase family. Type 1 subfamily.

The protein resides in the cytoplasm. The catalysed reaction is N-acetyl-L-glutamate 5-semialdehyde + phosphate + NADP(+) = N-acetyl-L-glutamyl 5-phosphate + NADPH + H(+). The protein operates within amino-acid biosynthesis; L-arginine biosynthesis; N(2)-acetyl-L-ornithine from L-glutamate: step 3/4. Catalyzes the NADPH-dependent reduction of N-acetyl-5-glutamyl phosphate to yield N-acetyl-L-glutamate 5-semialdehyde. In Cereibacter sphaeroides (strain ATCC 17025 / ATH 2.4.3) (Rhodobacter sphaeroides), this protein is N-acetyl-gamma-glutamyl-phosphate reductase.